A 41-amino-acid chain; its full sequence is DCEQHTDCSAASGPVYCCQDSDCCGGVDYICTNYGQCVRHF.

In terms of processing, contains 4 disulfide bonds. In terms of tissue distribution, expressed by the venom duct.

The protein resides in the secreted. Its function is as follows. Does not elicit any observable symptomatology in C.elegans. This chain is Augerpeptide-s11a, found in Terebra subulata (Chocolate spotted auger).